Reading from the N-terminus, the 2244-residue chain is Multifunctional protein ura1 (2244 aa).

The segment at 1 to 437 (MSGLLPSLSS…GPRDTEFLFD (437 aa)) is GATase (Glutamine amidotransferase). The disordered stretch occupies residues 16–44 (QSEALGMPRTHGPKPSENDPKEPTCSPSP). Residues S101, G309, and G311 each coordinate L-glutamine. Residues 264 to 449 (RILVIDVGMK…IDVVKRSADA (186 aa)) form the Glutamine amidotransferase type-1 domain. The active-site Nucleophile; for GATase activity is C338. L-glutamine-binding residues include Q342, N380, G382, and Y383. Catalysis depends on for GATase activity residues H422 and E424. The segment at 438–477 (VFIDVVKRSADAKSLQPFKLPGGTIEENRSRHPLVDAKRV) is linker. The segment at 478–1014 (LILGSGGLSI…VEHDIHFNDK (537 aa)) is CPSase A. A CPSase (Carbamoyl phosphate synthase) region spans residues 478–1514 (LILGSGGLSI…TNVKCAKLMI (1037 aa)). R594, R634, G640, G641, R671, M673, E678, G704, I705, H706, Q747, and E761 together coordinate ATP. The region spanning 598–790 (ARAMDEINEK…LAFTAAKLGL (193 aa)) is the ATP-grasp 1 domain. Residues Q747, E761, and N763 each coordinate Mg(2+). Positions 747, 761, and 763 each coordinate Mn(2+). Residues 1015–1514 (GVMVLGSGVY…TNVKCAKLMI (500 aa)) are CPSase B. At S1119 the chain carries Phosphoserine. An ATP-grasp 2 domain is found at 1133–1324 (SRMLDDIGVD…MISMATDVIM (192 aa)). Residues R1169, K1208, I1210, E1215, G1240, V1241, H1242, S1243, Q1283, and E1295 each coordinate ATP. Positions 1283, 1295, and 1297 each coordinate Mg(2+). Mn(2+) is bound by residues Q1283, E1295, and N1297. The MGS-like domain maps to 1390 to 1552 (FRLPKKNILI…INISAFLPEF (163 aa)). The linker stretch occupies residues 1515 to 1524 (EAICRNLDFS). Residues 1525–1853 (LSTVDFQSSF…FDGHDVFFDG (329 aa)) are defective DHOase domain. A linker region spans residues 1854–1935 (ELNFEHTYGR…VQLINSSPFY (82 aa)). Residues S1881 and S1885 each carry the phosphoserine modification. Residues 1936-2244 (RKHIISVHQV…CVMGATEVAN (309 aa)) are ATCase (Aspartate transcarbamylase). 2 residues coordinate carbamoyl phosphate: R1988 and T1989. Position 2016 (K2016) interacts with L-aspartate. The carbamoyl phosphate site is built by R2037, H2065, and Q2068. Residues R2098 and R2160 each coordinate L-aspartate. Residues L2199 and P2200 each contribute to the carbamoyl phosphate site.

In the N-terminal section; belongs to the CarA family. It in the 2nd section; belongs to the CarB family. This sequence in the 3rd section; belongs to the metallo-dependent hydrolases superfamily. DHOase family. CAD subfamily. The protein in the C-terminal section; belongs to the aspartate/ornithine carbamoyltransferase superfamily. ATCase family. Mg(2+) serves as cofactor. The cofactor is Mn(2+).

It carries out the reaction hydrogencarbonate + L-glutamine + 2 ATP + H2O = carbamoyl phosphate + L-glutamate + 2 ADP + phosphate + 2 H(+). The catalysed reaction is L-glutamine + H2O = L-glutamate + NH4(+). The enzyme catalyses hydrogencarbonate + NH4(+) + 2 ATP = carbamoyl phosphate + 2 ADP + phosphate + 2 H(+). It catalyses the reaction carbamoyl phosphate + L-aspartate = N-carbamoyl-L-aspartate + phosphate + H(+). It functions in the pathway pyrimidine metabolism; UMP biosynthesis via de novo pathway; (S)-dihydroorotate from bicarbonate: step 1/3. Its pathway is pyrimidine metabolism; UMP biosynthesis via de novo pathway; (S)-dihydroorotate from bicarbonate: step 2/3. With respect to regulation, both CPSase and ATCase activities are feedback inhibited by the end product UTP. In terms of biological role, multifunctional protein that encodes the first 2 enzymatic activities of the de novo pyrimidine pathway: carbamoylphosphate synthetase (CPSase; EC 6.3.5.5) and aspartate transcarbamylase (ATCase; EC 2.1.3.2). The CPSase-function is accomplished in 2 steps, by a glutamine-dependent amidotransferase activity (GATase) that binds and cleaves glutamine to produce ammonia, followed by an ammonium-dependent carbamoyl phosphate synthetase, which reacts with the ammonia, hydrogencarbonate and ATP to form carbamoyl phosphate. The endogenously produced carbamoyl phosphate is sequestered and channeled to the ATCase active site. ATCase then catalyzes the formation of carbamoyl-L-aspartate from L-aspartate and carbamoyl phosphate. The polypeptide is Multifunctional protein ura1 (ura1) (Schizosaccharomyces pombe (strain 972 / ATCC 24843) (Fission yeast)).